We begin with the raw amino-acid sequence, 207 residues long: Proteasome subunit beta 1 (207 aa).

Positions 1–9 (MWALDKIKG) are cleaved as a propeptide — removed in mature form; by autocatalysis. Threonine 10 (nucleophile) is an active-site residue.

This sequence belongs to the peptidase T1B family. As to quaternary structure, the 20S proteasome core is composed of 14 alpha and 14 beta subunits that assemble into four stacked heptameric rings, resulting in a barrel-shaped structure. The two inner rings, each composed of seven catalytic beta subunits, are sandwiched by two outer rings, each composed of seven alpha subunits. The catalytic chamber with the active sites is on the inside of the barrel. Has a gated structure, the ends of the cylinder being occluded by the N-termini of the alpha-subunits. Is capped at one or both ends by the proteasome regulatory ATPase, PAN.

The protein resides in the cytoplasm. It catalyses the reaction Cleavage of peptide bonds with very broad specificity.. Its activity is regulated as follows. The formation of the proteasomal ATPase PAN-20S proteasome complex, via the docking of the C-termini of PAN into the intersubunit pockets in the alpha-rings, triggers opening of the gate for substrate entry. Interconversion between the open-gate and close-gate conformations leads to a dynamic regulation of the 20S proteasome proteolysis activity. Its function is as follows. Component of the proteasome core, a large protease complex with broad specificity involved in protein degradation. The protein is Proteasome subunit beta 1 of Thermococcus sibiricus (strain DSM 12597 / MM 739).